The chain runs to 62 residues: Defensin BmKDfsin6 (62 aa).

The first 24 residues, 1 to 24 (MKVIAILFLLAFVLCTMEITMVEA), serve as a signal peptide directing secretion. 3 disulfide bridges follow: cysteine 28-cysteine 49, cysteine 35-cysteine 57, and cysteine 39-cysteine 59.

This sequence belongs to the invertebrate defensin family. Type 2 subfamily. As to expression, highly expressed in non-venom gland (hemolymph) and moderately expressed in venom gland.

It is found in the secreted. Functionally, antibacterial peptide active against Gram-positive bacteria, but not on Gram-negative bacteria. Also has weak blocking activity on Kv1.1/KCNA1, Kv1.2/KCNA2, Kv1.3/KCNA3, KCa3.1/KCNN4/IK, KCa2.3/KCNN3/SK3 and Kv11.1/KCNH2/ERG1 channels (tested at 1 uM). It inhibits potassium channel current by interacting with the pore region. The polypeptide is Defensin BmKDfsin6 (Olivierus martensii (Manchurian scorpion)).